Reading from the N-terminus, the 362-residue chain is MGYLSCKAGSAVAIAVSSAASTSGSTSSKASAPPESPIEDRPRLRRFLHRDLESATGGFDINNLLGRGSHGSVYKAVIGSRHIAVKRPSKSREISREFHNEFEILSRIRSPRFVNLLGFSADNSKEPLLVVEFMGNGSLYDVIHSDTVLNSGAISSWSKRIKIALQIAKAVHLLHSQETPIIHRDIKSANVLMDKNLNAKLGDFGLAIRCNVDDQKVKSTPPAGTMGYLDPDYVTADRLSTKTDVFSFGILLLEIISGRKAIDVRYSPSFIVDWAIPMIKRGKIGGIYDPRIGPPIDVSVRNHLGLVAAKCVRTCREKRPGMEEVVGWLTGLTKSVRSRRWDELSIGNPCMMVETVGGRPVE.

The signal sequence occupies residues Met-1–Gly-24. Residues Ser-21–Ala-32 are compositionally biased toward low complexity. The tract at residues Ser-21–Arg-43 is disordered. The region spanning Phe-59–Leu-329 is the Protein kinase domain. ATP-binding positions include Leu-65 to Val-73 and Lys-86. N-linked (GlcNAc...) asparagine glycosylation is present at Asn-136. Asp-185 (proton acceptor) is an active-site residue. Ser-219 bears the Phosphoserine mark. Phosphothreonine occurs at positions 220 and 225. Tyr-233 carries the phosphotyrosine modification.

It belongs to the protein kinase superfamily. Ser/Thr protein kinase family.

It is found in the secreted. It carries out the reaction L-seryl-[protein] + ATP = O-phospho-L-seryl-[protein] + ADP + H(+). The enzyme catalyses L-threonyl-[protein] + ATP = O-phospho-L-threonyl-[protein] + ADP + H(+). This is Serine/threonine-protein kinase-like protein At3g51990 from Arabidopsis thaliana (Mouse-ear cress).